We begin with the raw amino-acid sequence, 284 residues long: Short-chain dehydrogenase RED1 (284 aa).

The NADP(+) site is built by Ile-11, Thr-37, Asp-58, Asn-86, Tyr-151, Lys-155, Val-184, and Thr-186. Tyr-151 functions as the Proton acceptor in the catalytic mechanism. Lys-155 functions as the Lowers pKa of active site Tyr in the catalytic mechanism.

The protein belongs to the short-chain dehydrogenases/reductases (SDR) family.

It participates in polyketide biosynthesis. Its function is as follows. Short-chain dehydrogenase; part of the gene cluster that mediates the biosynthesis of pyriculol and pyriculariol, two heptaketides that induce lesion formation upon application on rice leaves but are dispensable for pathogenicity. The highly reducing polyketide synthase synthesizes the heptaketide backbone of pyriculol and pyriculariol. Pyriculol and pyriculariol contain several hydroxyl moieties and double bonds, so it can be assumed that several reduction steps occur during biosynthesis. These reactions could be executed by PKS19 itself or partly by the tailoring enzymes OXR1, OXR2, RED1, RED2 or RED3, identified within the cluster. The FAD-linked oxidoreductase OXR1 is the only tailoring enzyme for which the function has been determined yet, and is involved in the oxidation of dihydropyriculol and dihydropyriculariol into pyriculol and pyriculariol, respectively. In Pyricularia oryzae (strain 70-15 / ATCC MYA-4617 / FGSC 8958) (Rice blast fungus), this protein is Short-chain dehydrogenase RED1.